We begin with the raw amino-acid sequence, 147 residues long: Bis(5'-nucleosyl)-tetraphosphatase [asymmetrical] (147 aa).

Residues 1–139 (MALRACGLII…EMKAALQEGH (139 aa)) enclose the Nudix hydrolase domain. At Ala2 the chain carries N-acetylalanine. The short motif at 43 to 64 (GHVEPGEDDLETALRETQEEAG) is the Nudix box element.

The protein belongs to the Nudix hydrolase family. A divalent metal cation is required as a cofactor.

It catalyses the reaction P(1),P(4)-bis(5'-guanosyl) tetraphosphate + H2O = GMP + GTP + 2 H(+). The catalysed reaction is a 5'-end CoA-ribonucleoside in mRNA + H2O = a 5'-end phospho-adenosine-phospho-ribonucleoside in mRNA + (R)-4'-phosphopantetheine + 2 H(+). The enzyme catalyses a 5'-end FAD-phospho-ribonucleoside in mRNA + H2O = a 5'-end phospho-adenosine-phospho-ribonucleoside in mRNA + FMN + 2 H(+). Catalyzes the asymmetric hydrolysis of diadenosine 5',5'''-P1,P4-tetraphosphate (Ap4A) to yield AMP and ATP. Exhibits decapping activity towards FAD-capped RNAs and dpCoA-capped RNAs in vitro. The protein is Bis(5'-nucleosyl)-tetraphosphatase [asymmetrical] (NUDT2) of Homo sapiens (Human).